The primary structure comprises 130 residues: Astrocytic phosphoprotein PEA-15 (130 aa).

One can recognise a DED domain in the interval 3 to 81 (EYGTLLQDLT…RPDLLTMVVD (79 aa)). Residues serine 61 and serine 90 each carry the phosphoserine modification. The tract at residues 98–107 (KLTRIPSAKK) is microtubule-binding. Serine 104 carries the post-translational modification Phosphoserine; by PKC. At serine 116 the chain carries Phosphoserine; by CaMK2. Residues 122–129 (KLAPPPKK) form a microtubule-binding region.

In terms of assembly, binds RPS6KA3, MAPK3 and MAPK1. Interacts with CASP8 and FADD. Transient interaction with PLD1 and PLD2. Post-translationally, phosphorylated by protein kinase C and calcium-calmodulin-dependent protein kinase. These phosphorylation events are modulated by neurotransmitters or hormones. In terms of tissue distribution, predominantly expressed in the brain. Low levels in some peripheral organs.

It localises to the cytoplasm. Blocks Ras-mediated inhibition of integrin activation and modulates the ERK MAP kinase cascade. Inhibits RPS6KA3 activities by retaining it in the cytoplasm. Inhibits both TNFRSF6- and TNFRSF1A-mediated CASP8 activity and apoptosis. Regulates glucose transport by controlling both the content of SLC2A1 glucose transporters on the plasma membrane and the insulin-dependent trafficking of SLC2A4 from the cell interior to the surface. In Mus musculus (Mouse), this protein is Astrocytic phosphoprotein PEA-15 (Pea15).